The following is a 783-amino-acid chain: Cation/H(+) antiporter 11 (783 aa).

The next 12 helical transmembrane spans lie at 31–51 (VVFG…FFCI), 61–81 (IGVS…PQLF), 101–120 (AALR…LMTV), 135–155 (VVIG…LNLF), 175–195 (VIVI…LLEL), 205–225 (LALS…IVAT), 244–264 (AVII…QWII), 276–295 (IYIH…FVFF), 300–322 (VLGP…ALEA), 360–380 (IFLT…LCLY), 389–409 (LAVS…YEAV), and 418–438 (ATYA…PMVV).

It belongs to the monovalent cation:proton antiporter 2 (CPA2) transporter (TC 2.A.37) family. CHX (TC 2.A.37.4) subfamily. As to expression, specifically expressed in pollen.

The protein localises to the membrane. In terms of biological role, may operate as a cation/H(+) antiporter. The sequence is that of Cation/H(+) antiporter 11 (CHX11) from Arabidopsis thaliana (Mouse-ear cress).